We begin with the raw amino-acid sequence, 241 residues long: 1-(5-phosphoribosyl)-5-[(5-phosphoribosylamino)methylideneamino] imidazole-4-carboxamide isomerase (241 aa).

The active-site Proton acceptor is the D8. Catalysis depends on D129, which acts as the Proton donor.

This sequence belongs to the HisA/HisF family.

The protein resides in the cytoplasm. The enzyme catalyses 1-(5-phospho-beta-D-ribosyl)-5-[(5-phospho-beta-D-ribosylamino)methylideneamino]imidazole-4-carboxamide = 5-[(5-phospho-1-deoxy-D-ribulos-1-ylimino)methylamino]-1-(5-phospho-beta-D-ribosyl)imidazole-4-carboxamide. It participates in amino-acid biosynthesis; L-histidine biosynthesis; L-histidine from 5-phospho-alpha-D-ribose 1-diphosphate: step 4/9. In Novosphingobium aromaticivorans (strain ATCC 700278 / DSM 12444 / CCUG 56034 / CIP 105152 / NBRC 16084 / F199), this protein is 1-(5-phosphoribosyl)-5-[(5-phosphoribosylamino)methylideneamino] imidazole-4-carboxamide isomerase.